A 454-amino-acid chain; its full sequence is tRNA modification GTPase MnmE (454 aa).

(6S)-5-formyl-5,6,7,8-tetrahydrofolate is bound by residues Arg23, Glu80, and Lys120. In terms of domain architecture, TrmE-type G spans 216-377; it reads GMKVVIAGRP…LRNHLKQSMG (162 aa). Asn226 contributes to the K(+) binding site. GTP contacts are provided by residues 226–231, 245–251, 270–273, 335–338, and 358–360; these read NAGKSS, TDIAGTT, DTAG, NKAD, and SAR. Residue Ser230 coordinates Mg(2+). K(+) is bound by residues Thr245, Ile247, and Thr250. Thr251 lines the Mg(2+) pocket. Lys454 is a binding site for (6S)-5-formyl-5,6,7,8-tetrahydrofolate.

Belongs to the TRAFAC class TrmE-Era-EngA-EngB-Septin-like GTPase superfamily. TrmE GTPase family. As to quaternary structure, homodimer. Heterotetramer of two MnmE and two MnmG subunits. Requires K(+) as cofactor.

The protein localises to the cytoplasm. Functionally, exhibits a very high intrinsic GTPase hydrolysis rate. Involved in the addition of a carboxymethylaminomethyl (cmnm) group at the wobble position (U34) of certain tRNAs, forming tRNA-cmnm(5)s(2)U34. The protein is tRNA modification GTPase MnmE of Citrobacter koseri (strain ATCC BAA-895 / CDC 4225-83 / SGSC4696).